Consider the following 119-residue polypeptide: Large ribosomal subunit protein bL20 (119 aa).

The protein belongs to the bacterial ribosomal protein bL20 family.

Binds directly to 23S ribosomal RNA and is necessary for the in vitro assembly process of the 50S ribosomal subunit. It is not involved in the protein synthesizing functions of that subunit. This chain is Large ribosomal subunit protein bL20, found in Listeria innocua serovar 6a (strain ATCC BAA-680 / CLIP 11262).